The sequence spans 488 residues: Integrin beta-like protein 1 (488 aa).

Positions 1 to 21 are cleaved as a signal peptide; the sequence is MHAGAFINFVWALSLVSLLAA. Intrachain disulfides connect cysteine 38–cysteine 65, cysteine 49–cysteine 63, cysteine 57–cysteine 68, cysteine 70–cysteine 83, cysteine 85–cysteine 106, cysteine 90–cysteine 104, cysteine 98–cysteine 109, cysteine 111–cysteine 120, cysteine 126–cysteine 153, cysteine 137–cysteine 151, cysteine 145–cysteine 156, cysteine 158–cysteine 172, cysteine 174–cysteine 196, cysteine 179–cysteine 194, cysteine 188–cysteine 199, cysteine 201–cysteine 210, cysteine 214–cysteine 241, cysteine 225–cysteine 239, cysteine 233–cysteine 244, cysteine 246–cysteine 263, cysteine 265–cysteine 290, cysteine 270–cysteine 288, cysteine 282–cysteine 293, cysteine 295–cysteine 304, cysteine 310–cysteine 337, cysteine 321–cysteine 335, cysteine 329–cysteine 340, cysteine 342–cysteine 355, cysteine 357–cysteine 378, cysteine 362–cysteine 376, cysteine 370–cysteine 381, cysteine 383–cysteine 392, cysteine 398–cysteine 425, cysteine 409–cysteine 423, cysteine 417–cysteine 428, cysteine 430–cysteine 442, cysteine 444–cysteine 465, cysteine 449–cysteine 463, cysteine 457–cysteine 468, and cysteine 470–cysteine 479. 10 I-EGF domains span residues 38–84, 85–121, 126–173, 174–211, 214–264, 265–305, 310–356, 357–393, 398–443, and 444–480; these read CRLP…PLCE, CHDWVCHTYDGQVCAGHGQCDCGVCKCDVGWSGEACQ, CDLT…KYCE, CDDTECFDDETQEICGGHGKCYCGNCYCEAGWHGDKCE, CDIT…DTCE, CDER…RKCE, CALS…KNCE, CDDRQCEDLEGKICGEHGTCSCGRCICEAGWFGKLCQ, CNMT…EFCE, and CDDRDCDKHDGLICTGNGICNCGNCECWEGWNGNACE. Residues 49-89 form an I repeat; sequence CRTPDGSICSGRGSCDCGICLCEVKEAGKYYGPLCECHDWV. Residues 49–488 are cysteine-rich tandem repeats; that stretch reads CRTPDGSICS…CEIWLGSEYP (440 aa). Residues 90–136 form an II repeat; the sequence is CHTYDGQVCAGHGQCDCGVCKCDVGWSGEACQYPTTCDLTRKKSNEM. One copy of the III repeat lies at 137-178; the sequence is CKNSQAVICSNAGTCQCGRCKCENSDNSGLIYGKYCECDDTE. One copy of the IV repeat lies at 179–224; the sequence is CFDDETQEICGGHGKCYCGNCYCEAGWHGDKCEFQCDITPWEIKKR. A V repeat occupies 225–269; sequence CTSPDGKICSNRGTCVCGECTCHDVDPTGDWGDIHGDTCECDERN. Residues 270–320 form a VI repeat; it reads CKSVYDRYSDDFCSGHGQCNCGRCDCKDGWTGRKCEHPRACALSIEESKKK. The stretch at 321–361 is one VII repeat; that stretch reads CQGSASQPCSGRGKCECGQCTCFPPGDSKVYGKNCECDDRQ. A VIII repeat occupies 362 to 408; sequence CEDLEGKICGEHGTCSCGRCICEAGWFGKLCQHERKCNMTEEESKSQ. A glycan (N-linked (GlcNAc...) asparagine) is linked at asparagine 399. The IX repeat unit spans residues 409 to 448; sequence CESDDGILCSGKGSCHCGKCICSPQEWYVSGEFCECDDRD. One copy of the X repeat lies at 449 to 488; sequence CDKHDGLICTGNGICNCGNCECWEGWNGNACEIWLGSEYP.

The protein resides in the secreted. In Xenopus laevis (African clawed frog), this protein is Integrin beta-like protein 1 (itgbl1).